The sequence spans 143 residues: Antiholin-like protein LrgA (143 aa).

A run of 4 helical transmembrane segments spans residues 6 to 26 (VYSF…SNII), 30 to 50 (LPIP…LLCL), 61 to 81 (LGTA…ISVI), and 97 to 117 (VIVV…QFIL).

The protein belongs to the CidA/LrgA family. LrgA subfamily.

The protein localises to the cell membrane. In terms of biological role, inhibits the expression or activity of extracellular murein hydrolases by interacting, possibly with LrgB, with the holin-like protein CidA. The LrgAB and CidA proteins may affect the proton motive force of the membrane. May be involved in programmed cell death (PCD), possibly triggering PCD in response to antibiotics and environmental stresses. This chain is Antiholin-like protein LrgA, found in Bacillus anthracis (strain A0248).